A 369-amino-acid chain; its full sequence is Anhydro-N-acetylmuramic acid kinase (369 aa).

Gly-12–Asp-19 is an ATP binding site.

Belongs to the anhydro-N-acetylmuramic acid kinase family.

The catalysed reaction is 1,6-anhydro-N-acetyl-beta-muramate + ATP + H2O = N-acetyl-D-muramate 6-phosphate + ADP + H(+). It participates in amino-sugar metabolism; 1,6-anhydro-N-acetylmuramate degradation. It functions in the pathway cell wall biogenesis; peptidoglycan recycling. In terms of biological role, catalyzes the specific phosphorylation of 1,6-anhydro-N-acetylmuramic acid (anhMurNAc) with the simultaneous cleavage of the 1,6-anhydro ring, generating MurNAc-6-P. Is required for the utilization of anhMurNAc either imported from the medium or derived from its own cell wall murein, and thus plays a role in cell wall recycling. This chain is Anhydro-N-acetylmuramic acid kinase, found in Escherichia coli O1:K1 / APEC.